The chain runs to 568 residues: Cytochrome P450 monooxygenase 41 (568 aa).

The helical transmembrane segment at 21–41 (LTSLVPLILSVMVCLIATVTI) threads the bilayer. N321 and N377 each carry an N-linked (GlcNAc...) asparagine glycan. C514 provides a ligand contact to heme.

Belongs to the cytochrome P450 family. The cofactor is heme.

Its subcellular location is the membrane. Its pathway is secondary metabolite biosynthesis. Its function is as follows. Cytochrome P450 monooxygenase that is able to use 3,5-dimethoxy-trans-stilbene and 3,5,4'-trimethoxy-trans-stilbene as substrates for oxidation. The protein is Cytochrome P450 monooxygenase 41 of Postia placenta (strain ATCC 44394 / Madison 698-R) (Brown rot fungus).